The chain runs to 80 residues: Cell division activator CedA (80 aa).

Belongs to the CedA family.

Functionally, activates the cell division inhibited by chromosomal DNA over-replication. The sequence is that of Cell division activator CedA from Escherichia coli (strain SMS-3-5 / SECEC).